The primary structure comprises 146 residues: Protein archease (146 aa).

Asp16, Asp145, and Ile146 together coordinate Ca(2+).

It belongs to the archease family.

In terms of biological role, activates the tRNA-splicing ligase complex by facilitating the enzymatic turnover of catalytic subunit RtcB. Acts by promoting the guanylylation of RtcB, a key intermediate step in tRNA ligation. Can also alter the NTP specificity of RtcB such that ATP, dGTP or ITP is used efficiently. The sequence is that of Protein archease from Methanosarcina barkeri (strain Fusaro / DSM 804).